The chain runs to 111 residues: Nucleoid-associated protein Cpar_0834 (111 aa).

Belongs to the YbaB/EbfC family. As to quaternary structure, homodimer.

It localises to the cytoplasm. The protein localises to the nucleoid. Its function is as follows. Binds to DNA and alters its conformation. May be involved in regulation of gene expression, nucleoid organization and DNA protection. In Chlorobaculum parvum (strain DSM 263 / NCIMB 8327) (Chlorobium vibrioforme subsp. thiosulfatophilum), this protein is Nucleoid-associated protein Cpar_0834.